The following is a 151-amino-acid chain: Ribosome maturation factor RimP (151 aa).

It belongs to the RimP family.

It is found in the cytoplasm. Its function is as follows. Required for maturation of 30S ribosomal subunits. The chain is Ribosome maturation factor RimP from Haemophilus influenzae (strain PittEE).